Here is a 43-residue protein sequence, read N- to C-terminus: Photosystem I reaction center subunit IX (43 aa).

The helical transmembrane segment at 7–27 (YLSTAPVLATFWFGLLAGLLI) threads the bilayer.

Belongs to the PsaJ family.

It is found in the plastid. Its subcellular location is the chloroplast thylakoid membrane. Its function is as follows. May help in the organization of the PsaE and PsaF subunits. The sequence is that of Photosystem I reaction center subunit IX from Gnetum parvifolium (Small-leaved jointfir).